Reading from the N-terminus, the 351-residue chain is Protein arginine N-methyltransferase 1 (351 aa).

In terms of domain architecture, SAM-dependent MTase PRMT-type spans 30–331; the sequence is KDYYFDSYAH…KNNRDLDFTV (302 aa). Positions 43, 52, 76, 98, and 127 each coordinate S-adenosyl-L-methionine. Catalysis depends on residues Glu142 and Glu151.

This sequence belongs to the class I-like SAM-binding methyltransferase superfamily. Protein arginine N-methyltransferase family. In terms of assembly, homodimer. Homooctamer; individual homodimers associates to form a homooctamer and homooligomerization is required for proper localization to the cell membrane. Individual homodimers can associate to form a homohexamer. Component of a complex with lsm14a/rap55a. Interacts with cirbp.

It is found in the nucleus. The protein localises to the nucleoplasm. The protein resides in the cytoplasm. It localises to the cytosol. The enzyme catalyses L-arginyl-[protein] + 2 S-adenosyl-L-methionine = N(omega),N(omega)-dimethyl-L-arginyl-[protein] + 2 S-adenosyl-L-homocysteine + 2 H(+). The catalysed reaction is L-arginyl-[protein] + S-adenosyl-L-methionine = N(omega)-methyl-L-arginyl-[protein] + S-adenosyl-L-homocysteine + H(+). It carries out the reaction N(omega)-methyl-L-arginyl-[protein] + S-adenosyl-L-methionine = N(omega),N(omega)-dimethyl-L-arginyl-[protein] + S-adenosyl-L-homocysteine + H(+). In terms of biological role, arginine methyltransferase that methylates (mono and asymmetric dimethylation) the guanidino nitrogens of arginyl residues present in target proteins. Constitutes the main enzyme that mediates monomethylation and asymmetric dimethylation of histone H4 'Arg-3' (H4R3me1 and H4R3me2a, respectively), a specific tag for epigenetic transcriptional activation. Methylates ilf3 to regulate its DNA-binding activity. Required for neural induction, playing a key role in the control of epidermal versus neural cell fate choice. Methylates cirbp to regulate its subcellular location. Acts transiently during metamorphosis as a transcription coactivator, enhancing thyroid hormone (T3) receptor (TR)-mediated transcription by enhancing TR binding to the T3 response element (TRE), and histone modification through recruitment of other coactivators. The sequence is that of Protein arginine N-methyltransferase 1 from Xenopus tropicalis (Western clawed frog).